Here is a 442-residue protein sequence, read N- to C-terminus: Lipoyl synthase, apicoplast (442 aa).

An N-terminal signal peptide occupies residues Met1–Ser25. Residues Leu92–Pro154 form a disordered region. The segment covering Leu109–Glu127 has biased composition (basic and acidic residues). [4Fe-4S] cluster-binding residues include Cys177, Cys182, Cys188, Cys203, Cys207, Cys210, and Ser418. Residues Trp189 to Lys407 form the Radical SAM core domain.

The protein belongs to the radical SAM superfamily. Lipoyl synthase family. Requires [4Fe-4S] cluster as cofactor.

The protein resides in the plastid. Its subcellular location is the apicoplast. It carries out the reaction [[Fe-S] cluster scaffold protein carrying a second [4Fe-4S](2+) cluster] + N(6)-octanoyl-L-lysyl-[protein] + 2 oxidized [2Fe-2S]-[ferredoxin] + 2 S-adenosyl-L-methionine + 4 H(+) = [[Fe-S] cluster scaffold protein] + N(6)-[(R)-dihydrolipoyl]-L-lysyl-[protein] + 4 Fe(3+) + 2 hydrogen sulfide + 2 5'-deoxyadenosine + 2 L-methionine + 2 reduced [2Fe-2S]-[ferredoxin]. It functions in the pathway protein modification; protein lipoylation via endogenous pathway; protein N(6)-(lipoyl)lysine from octanoyl-[acyl-carrier-protein]: step 2/2. Its function is as follows. Catalyzes the radical-mediated insertion of two sulfur atoms into the C-6 and C-8 positions of the octanoyl moiety bound to the lipoyl domains of lipoate-dependent enzymes, thereby converting the octanoylated domains into lipoylated derivatives. This is Lipoyl synthase, apicoplast from Plasmodium vivax (strain Salvador I).